The sequence spans 417 residues: Acid phosphatase (417 aa).

Positions 1 to 19 (MFTKQSLVTLLGGLSLAVA) are cleaved as a signal peptide. N-linked (GlcNAc...) asparagine glycans are attached at residues Asn122, Asn187, and Asn209. Catalysis depends on Asp216, which acts as the Proton donor. 3 N-linked (GlcNAc...) asparagine glycosylation sites follow: Asn218, Asn333, and Asn383.

In terms of processing, the N-terminus is blocked.

The protein resides in the secreted. It carries out the reaction a phosphate monoester + H2O = an alcohol + phosphate. The sequence is that of Acid phosphatase (phoA) from Aspergillus niger.